Here is a 120-residue protein sequence, read N- to C-terminus: uncharacterized protein (120 aa).

The chain crosses the membrane as a helical span at residues 19–41; sequence YPELFITWCVMTYTFGVAGYMLG. The disordered stretch occupies residues 57-78; sequence SKNAHPWEDTKSSSGKSDESLD. Over residues 61 to 75 the composition is skewed to basic and acidic residues; the sequence is HPWEDTKSSSGKSDE.

The protein resides in the membrane. This is an uncharacterized protein from Schizosaccharomyces pombe (strain 972 / ATCC 24843) (Fission yeast).